We begin with the raw amino-acid sequence, 200 residues long: NADH-quinone oxidoreductase subunit C (200 aa).

The protein belongs to the complex I 30 kDa subunit family. In terms of assembly, NDH-1 is composed of 14 different subunits. Subunits NuoB, C, D, E, F, and G constitute the peripheral sector of the complex.

It localises to the cell inner membrane. It carries out the reaction a quinone + NADH + 5 H(+)(in) = a quinol + NAD(+) + 4 H(+)(out). In terms of biological role, NDH-1 shuttles electrons from NADH, via FMN and iron-sulfur (Fe-S) centers, to quinones in the respiratory chain. The immediate electron acceptor for the enzyme in this species is believed to be ubiquinone. Couples the redox reaction to proton translocation (for every two electrons transferred, four hydrogen ions are translocated across the cytoplasmic membrane), and thus conserves the redox energy in a proton gradient. This Burkholderia multivorans (strain ATCC 17616 / 249) protein is NADH-quinone oxidoreductase subunit C.